An 81-amino-acid polypeptide reads, in one-letter code: uncharacterized protein (81 aa).

This is an uncharacterized protein from Escherichia coli (strain K12).